The sequence spans 339 residues: SVP1-like protein 2 (339 aa).

2 WD repeats span residues 177–217 (AHAN…LVRE) and 222–261 (LDRT…ENKR).

It belongs to the WD repeat PROPPIN family.

It is found in the vacuole membrane. It localises to the cytoplasmic vesicle membrane. Its function is as follows. Involved in mitochondrial or peroxisomal functions and amino acid signaling pathways. The polypeptide is SVP1-like protein 2 (HSV2) (Kluyveromyces lactis (strain ATCC 8585 / CBS 2359 / DSM 70799 / NBRC 1267 / NRRL Y-1140 / WM37) (Yeast)).